A 532-amino-acid chain; its full sequence is Tyrosinase (532 aa).

The signal sequence occupies residues 1-22 (MESTTVLLAASTLLLVLHASYG). The Lumenal, melanosome portion of the chain corresponds to 23–479 (QFPRACSTAQ…LEQARQIWQW (457 aa)). N-linked (GlcNAc...) asparagine glycosylation is found at Asn-90, Asn-115, and Asn-165. 3 residues coordinate Cu cation: His-184, His-206, and His-215. N-linked (GlcNAc...) asparagine glycosylation is found at Asn-234 and Asn-341. Residues His-367 and His-371 each contribute to the Cu cation site. N-linked (GlcNAc...) asparagine glycosylation is present at Asn-375. His-394 serves as a coordination point for Cu cation. Residues 480–500 (LLGAAVVGGLVTAVIATIISL) traverse the membrane as a helical segment. The Cytoplasmic segment spans residues 501-532 (TCRRKRRTKTSEETRPLLMEAEDYHATYQSNL).

It belongs to the tyrosinase family. In terms of assembly, active tyrosinase has been found as a homodimer and homotetramer. Requires Cu(2+) as cofactor. In terms of tissue distribution, frog skin.

Its subcellular location is the melanosome membrane. It catalyses the reaction 2 L-dopa + O2 = 2 L-dopaquinone + 2 H2O. The catalysed reaction is L-tyrosine + O2 = L-dopaquinone + H2O. Its activity is regulated as follows. Activated by trypsin, chymotrypsin and subtilisin. Activated by alpha-chymotrypsin, thermolysin and Pronase. Inhibited by its product L-DOPA and tyrosine. Functionally, this is a copper-containing oxidase that functions in the formation of pigments such as melanins and other polyphenolic compounds. Catalyzes the initial and rate limiting step in the cascade of reactions leading to melanin production from tyrosine. In addition to hydroxylating tyrosine to DOPA (3,4-dihydroxyphenylalanine), also catalyzes the oxidation of DOPA to DOPA-quinone. The chain is Tyrosinase from Pelophylax lessonae (Pool frog).